We begin with the raw amino-acid sequence, 32 residues long: Cytochrome b6-f complex subunit 7 (32 aa).

The helical transmembrane segment at 5–25 (IFGTAAIFWVLIPAGLLGGAL) threads the bilayer.

This sequence belongs to the PetM family. The 4 large subunits of the cytochrome b6-f complex are cytochrome b6, subunit IV (17 kDa polypeptide, PetD), cytochrome f and the Rieske protein, while the 4 small subunits are PetG, PetL, PetM and PetN. The complex functions as a dimer.

It is found in the cellular thylakoid membrane. Component of the cytochrome b6-f complex, which mediates electron transfer between photosystem II (PSII) and photosystem I (PSI), cyclic electron flow around PSI, and state transitions. This Prochlorococcus marinus (strain SARG / CCMP1375 / SS120) protein is Cytochrome b6-f complex subunit 7.